An 87-amino-acid polypeptide reads, in one-letter code: Large ribosomal subunit protein bL31B (87 aa).

This sequence belongs to the bacterial ribosomal protein bL31 family. Type B subfamily. Part of the 50S ribosomal subunit.

This is Large ribosomal subunit protein bL31B from Latilactobacillus sakei subsp. sakei (strain 23K) (Lactobacillus sakei subsp. sakei).